A 182-amino-acid chain; its full sequence is Plasmolipin (182 aa).

The disordered stretch occupies residues Met1–Gly20. Topologically, residues Met1–Ser35 are cytoplasmic. Residues Lys7 to Ala16 are compositionally biased toward polar residues. Ser9 carries the post-translational modification Phosphoserine. Positions Phe32 to Arg166 constitute an MARVEL domain. A helical membrane pass occupies residues Ala36–Ala56. Over Asp57–Trp68 the chain is Extracellular. The helical transmembrane segment at Val69–Phe89 threads the bilayer. Over Gln90–Pro99 the chain is Cytoplasmic. A helical transmembrane segment spans residues Trp100–Val120. Over Ala121–Ser141 the chain is Extracellular. A helical transmembrane segment spans residues Ala142–Phe162. The Cytoplasmic portion of the chain corresponds to Gln163–Ser182.

Belongs to the MAL family. As to quaternary structure, forms oligomers. Post-translationally, phosphorylated. Detected to the sciatic nerve, brain and kidney. In the sciatic nerve, found in Schwann cells; in the brain, in developing oligodendrocytes, especially of the corpus callosum, of cortical white matter, in the optic nerve and in the stratum radiatum and stratum oriens of the hippocampus. In kidney, segregated to the apical surface of renal tubular epithelia.

Its subcellular location is the cell membrane. It localises to the myelin membrane. It is found in the apical cell membrane. Its function is as follows. Main component of the myelin sheath that plays an important role in myelin membrane biogenesis and myelination. Plays an essential function in apical endocytosis. Regulates epithelial development through the regulation of apical endocytosis. Part of the intracellular machinery that mediates basolateral-to-apical transport of ICAM-1, an essential adhesion receptor in epithelial cells, from the subapical compartment in hepatic epithelial cells. This Rattus norvegicus (Rat) protein is Plasmolipin (Pllp).